Consider the following 90-residue polypeptide: Progonadoliberin-1 (90 aa).

An N-terminal signal peptide occupies residues M1–G24. Residue Q25 is modified to Pyrrolidone carboxylic acid. A Glycine amide modification is found at G34.

This sequence belongs to the GnRH family. Forebrain.

The protein resides in the secreted. Its function is as follows. Stimulates the secretion of gonadotropins. This is Progonadoliberin-1 (gnrh1) from Aquarana catesbeiana (American bullfrog).